Reading from the N-terminus, the 147-residue chain is Large ribosomal subunit protein uL15 (147 aa).

Residues 1-13 show a composition bias toward basic and acidic residues; sequence MELHSLKAAEGSR. The segment at 1-57 is disordered; sequence MELHSLKAAEGSRKVRNRVGRGTSSGNGKTSGRGQKGQKSRSGGGVRPGFEGGQTEL. 2 stretches are compositionally biased toward gly residues: residues 23 to 35 and 42 to 52; these read TSSGNGKTSGRGQ and SGGGVRPGFEG.

It belongs to the universal ribosomal protein uL15 family. As to quaternary structure, part of the 50S ribosomal subunit.

Binds to the 23S rRNA. The protein is Large ribosomal subunit protein uL15 of Lactococcus lactis subsp. cremoris (strain MG1363).